We begin with the raw amino-acid sequence, 256 residues long: Hydroxyethylthiazole kinase (256 aa).

M38 serves as a coordination point for substrate. Positions 114 and 159 each coordinate ATP. G186 contributes to the substrate binding site.

The protein belongs to the Thz kinase family. Mg(2+) is required as a cofactor.

It carries out the reaction 5-(2-hydroxyethyl)-4-methylthiazole + ATP = 4-methyl-5-(2-phosphooxyethyl)-thiazole + ADP + H(+). It participates in cofactor biosynthesis; thiamine diphosphate biosynthesis; 4-methyl-5-(2-phosphoethyl)-thiazole from 5-(2-hydroxyethyl)-4-methylthiazole: step 1/1. Functionally, catalyzes the phosphorylation of the hydroxyl group of 4-methyl-5-beta-hydroxyethylthiazole (THZ). This chain is Hydroxyethylthiazole kinase, found in Streptococcus agalactiae serotype Ia (strain ATCC 27591 / A909 / CDC SS700).